The following is a 252-amino-acid chain: Glucosamine-6-phosphate deaminase (252 aa).

Asp-67 (proton acceptor; for enolization step) is an active-site residue. Catalysis depends on Asn-137, which acts as the For ring-opening step. Catalysis depends on His-139, which acts as the Proton acceptor; for ring-opening step. The active-site For ring-opening step is the Glu-144.

Belongs to the glucosamine/galactosamine-6-phosphate isomerase family. NagB subfamily.

It catalyses the reaction alpha-D-glucosamine 6-phosphate + H2O = beta-D-fructose 6-phosphate + NH4(+). Its pathway is amino-sugar metabolism; N-acetylneuraminate degradation; D-fructose 6-phosphate from N-acetylneuraminate: step 5/5. Functionally, catalyzes the reversible isomerization-deamination of glucosamine 6-phosphate (GlcN6P) to form fructose 6-phosphate (Fru6P) and ammonium ion. The polypeptide is Glucosamine-6-phosphate deaminase (Staphylococcus aureus (strain MRSA252)).